Consider the following 199-residue polypeptide: Charged multivesicular body protein 1B1 (199 aa).

Positions 10–48 (NLKFAAKELNRSSKKCDKEEKAEKAKIKKAIQKGNMEVA) form a coiled coil. The interval 132–156 (MEDTMSSTTTLTTPQNQVDMLLQEM) is interaction with IST1. Positions 167–199 (ELPQGQTGSVGTSVASAEQDELSQRLARLRDQV) are disordered. Polar residues predominate over residues 170–182 (QGQTGSVGTSVAS). Positions 174-199 (GSVGTSVASAEQDELSQRLARLRDQV) are interaction with SPAST. Positions 178-199 (TSVASAEQDELSQRLARLRDQV) form a coiled coil. The segment at 180–196 (VASAEQDELSQRLARLR) is interaction with VPS4A, MITD1 and STAMBP. Residues 180–199 (VASAEQDELSQRLARLRDQV) form an interaction with VTA1 region. The tract at residues 183–199 (AEQDELSQRLARLRDQV) is interaction with VPS4B. Positions 186–196 (DELSQRLARLR) match the MIT-interacting motif motif.

This sequence belongs to the SNF7 family. In terms of assembly, probable peripherally associated component of the endosomal sorting required for transport complex III (ESCRT-III). ESCRT-III components are thought to multimerize to form a flat lattice on the perimeter membrane of the endosome. Several assembly forms of ESCRT-III may exist that interact and act sequentially. Interacts with CHMP1A. Interacts with VTA1; the interaction probably involves the open conformation of CHMP1B. Interacts with CHMP2A. Interacts with VPS4A; the interaction is direct. Interacts with VPS4B; the interaction is direct. Interacts with SPAST (via MIT domain); the interaction is direct. Interacts with IST1. Interacts with MITD1. Interacts with STAMBP.

Its subcellular location is the cytoplasm. The protein resides in the cytosol. It localises to the endosome. It is found in the late endosome membrane. Functionally, probable peripherally associated component of the endosomal sorting required for transport complex III (ESCRT-III) which is involved in multivesicular bodies (MVBs) formation and sorting of endosomal cargo proteins into MVBs. MVBs contain intraluminal vesicles (ILVs) that are generated by invagination and scission from the limiting membrane of the endosome and mostly are delivered to lysosomes enabling degradation of membrane proteins, such as stimulated growth factor receptors, lysosomal enzymes and lipids. The MVB pathway appears to require the sequential function of ESCRT-O, -I,-II and -III complexes. ESCRT-III proteins mostly dissociate from the invaginating membrane before the ILV is released. The ESCRT machinery also functions in topologically equivalent membrane fission events, such as the terminal stages of cytokinesis. ESCRT-III proteins are believed to mediate the necessary vesicle extrusion and/or membrane fission activities, possibly in conjunction with the AAA ATPase VPS4. Involved in cytokinesis. Involved in recruiting VPS4A and/or VPS4B and SPAST to the midbody of dividing cells. The polypeptide is Charged multivesicular body protein 1B1 (Mus musculus (Mouse)).